We begin with the raw amino-acid sequence, 90 residues long: Acylphosphatase (90 aa).

The region spanning 3 to 90 is the Acylphosphatase-like domain; that stretch reads AVTLKATGRV…QNYHDFRITN (88 aa). Active-site residues include R18 and N36.

Belongs to the acylphosphatase family.

The enzyme catalyses an acyl phosphate + H2O = a carboxylate + phosphate + H(+). This is Acylphosphatase (acyP) from Lactiplantibacillus plantarum (strain ATCC BAA-793 / NCIMB 8826 / WCFS1) (Lactobacillus plantarum).